Reading from the N-terminus, the 1275-residue chain is ATP-dependent helicase/nuclease subunit A (1275 aa).

The UvrD-like helicase ATP-binding domain occupies 4–481 (PKWTKEQLEV…IMLYKNFRSR (478 aa)). Position 25-32 (25-32 (AAAGSGKT)) interacts with ATP. Residues 531 to 839 (TEIHLIQKDN…RIMSIHKSKG (309 aa)) form the UvrD-like helicase C-terminal domain.

Belongs to the helicase family. AddA subfamily. Heterodimer of AddA and AddB/RexB. Mg(2+) is required as a cofactor.

The catalysed reaction is Couples ATP hydrolysis with the unwinding of duplex DNA by translocating in the 3'-5' direction.. It catalyses the reaction ATP + H2O = ADP + phosphate + H(+). Its function is as follows. The heterodimer acts as both an ATP-dependent DNA helicase and an ATP-dependent, dual-direction single-stranded exonuclease. Recognizes the chi site generating a DNA molecule suitable for the initiation of homologous recombination. The AddA nuclease domain is required for chi fragment generation; this subunit has the helicase and 3' -&gt; 5' nuclease activities. This is ATP-dependent helicase/nuclease subunit A from Clostridioides difficile (strain 630) (Peptoclostridium difficile).